Consider the following 308-residue polypeptide: D-alanine--D-alanine ligase (308 aa).

An ATP-grasp domain is found at 103 to 302 (KTVMATAGVP…FDELVQWMVE (200 aa)). 130–184 (MAPPYVIKPVADGSSVGVFMVTEAHEHPPQELFRDDWPHGEQLLVEKYVAGKELT) provides a ligand contact to ATP. Residues Asp252, Glu269, and Asn271 each coordinate Mg(2+).

Belongs to the D-alanine--D-alanine ligase family. The cofactor is Mg(2+). Mn(2+) serves as cofactor.

The protein resides in the cytoplasm. The catalysed reaction is 2 D-alanine + ATP = D-alanyl-D-alanine + ADP + phosphate + H(+). Its pathway is cell wall biogenesis; peptidoglycan biosynthesis. In terms of biological role, cell wall formation. The sequence is that of D-alanine--D-alanine ligase from Rhodopseudomonas palustris (strain BisB18).